A 345-amino-acid polypeptide reads, in one-letter code: Probable dual-specificity RNA methyltransferase RlmN (345 aa).

The active-site Proton acceptor is Glu93. In terms of domain architecture, Radical SAM core spans 99-326; it reads DDERATLCIS…TTIRASRGED (228 aa). Cys106 and Cys331 are disulfide-bonded. Positions 113, 117, and 120 each coordinate [4Fe-4S] cluster. S-adenosyl-L-methionine-binding positions include 158 to 159, Ser190, 212 to 214, and His288; these read GE and SLH. The active-site S-methylcysteine intermediate is Cys331.

It belongs to the radical SAM superfamily. RlmN family. The cofactor is [4Fe-4S] cluster.

It localises to the cytoplasm. It carries out the reaction adenosine(2503) in 23S rRNA + 2 reduced [2Fe-2S]-[ferredoxin] + 2 S-adenosyl-L-methionine = 2-methyladenosine(2503) in 23S rRNA + 5'-deoxyadenosine + L-methionine + 2 oxidized [2Fe-2S]-[ferredoxin] + S-adenosyl-L-homocysteine. The catalysed reaction is adenosine(37) in tRNA + 2 reduced [2Fe-2S]-[ferredoxin] + 2 S-adenosyl-L-methionine = 2-methyladenosine(37) in tRNA + 5'-deoxyadenosine + L-methionine + 2 oxidized [2Fe-2S]-[ferredoxin] + S-adenosyl-L-homocysteine. In terms of biological role, specifically methylates position 2 of adenine 2503 in 23S rRNA and position 2 of adenine 37 in tRNAs. The polypeptide is Probable dual-specificity RNA methyltransferase RlmN (Bacteroides thetaiotaomicron (strain ATCC 29148 / DSM 2079 / JCM 5827 / CCUG 10774 / NCTC 10582 / VPI-5482 / E50)).